The chain runs to 359 residues: Protein-glutamate methylesterase/protein-glutamine glutaminase 1 (359 aa).

The Response regulatory domain occupies S4 to E121. D55 bears the 4-aspartylphosphate mark. The CheB-type methylesterase domain occupies Y169–L354. Active-site residues include S181, H207, and D303.

This sequence belongs to the CheB family. Phosphorylated by CheA. Phosphorylation of the N-terminal regulatory domain activates the methylesterase activity.

The protein localises to the cytoplasm. It catalyses the reaction [protein]-L-glutamate 5-O-methyl ester + H2O = L-glutamyl-[protein] + methanol + H(+). The catalysed reaction is L-glutaminyl-[protein] + H2O = L-glutamyl-[protein] + NH4(+). Its function is as follows. Involved in chemotaxis. Part of a chemotaxis signal transduction system that modulates chemotaxis in response to various stimuli. Catalyzes the demethylation of specific methylglutamate residues introduced into the chemoreceptors (methyl-accepting chemotaxis proteins or MCP) by CheR. Also mediates the irreversible deamidation of specific glutamine residues to glutamic acid. The protein is Protein-glutamate methylesterase/protein-glutamine glutaminase 1 of Chromobacterium violaceum (strain ATCC 12472 / DSM 30191 / JCM 1249 / CCUG 213 / NBRC 12614 / NCIMB 9131 / NCTC 9757 / MK).